Consider the following 494-residue polypeptide: Ankyrin repeat domain-containing protein 33B (494 aa).

Residues 1–80 form a disordered region; the sequence is MVLLAGTGPE…SAESVPEGVP (80 aa). Residues 30–42 show a composition bias toward acidic residues; the sequence is VEEDPADYEEFED. ANK repeat units lie at residues 84–113, 120–150, 154–183, 189–218, and 223–255; these read PETA…SVEE, NGRT…DVNW, EGNT…GLDL, FGFT…DVHA, and RGMS…PEQF. The tract at residues 349–494 is disordered; the sequence is RAARGPQAQE…RRTAPWKKRT (146 aa). The segment covering 371–382 has biased composition (basic and acidic residues); it reads TGQEDADSREGS. Position 405 is a phosphoserine (S405). 2 stretches are compositionally biased toward basic and acidic residues: residues 440–451 and 459–487; these read RPARKGSTKDSG and RYKE…ERRT. Positions 459 to 488 form a coiled coil; the sequence is RYKEAKEEKRKAEEAEKKRQAEAQKERRTA.

This is Ankyrin repeat domain-containing protein 33B (ANKRD33B) from Homo sapiens (Human).